A 157-amino-acid chain; its full sequence is Large ribosomal subunit protein uL11 (157 aa).

It belongs to the universal ribosomal protein uL11 family. In terms of assembly, part of the ribosomal stalk of the 50S ribosomal subunit. Interacts with L10 and the large rRNA to form the base of the stalk. L10 forms an elongated spine to which L12 dimers bind in a sequential fashion forming a multimeric L10(L12)X complex.

In terms of biological role, forms part of the ribosomal stalk which helps the ribosome interact with GTP-bound translation factors. The protein is Large ribosomal subunit protein uL11 of Methanocorpusculum labreanum (strain ATCC 43576 / DSM 4855 / Z).